Consider the following 299-residue polypeptide: 33 kDa chaperonin (299 aa).

Cystine bridges form between C234-C236 and C268-C271.

The protein belongs to the HSP33 family. In terms of processing, under oxidizing conditions two disulfide bonds are formed involving the reactive cysteines. Under reducing conditions zinc is bound to the reactive cysteines and the protein is inactive.

It localises to the cytoplasm. Functionally, redox regulated molecular chaperone. Protects both thermally unfolding and oxidatively damaged proteins from irreversible aggregation. Plays an important role in the bacterial defense system toward oxidative stress. The protein is 33 kDa chaperonin of Pseudomonas putida (strain GB-1).